The primary structure comprises 626 residues: DEAD-box ATP-dependent RNA helicase 16 (626 aa).

The segment at 1–48 (MGKTKLKPVEDVNSEVVDEVEKAEEVEEQRNDREQEEEQKEEEAPKSF) is disordered. Positions 9-47 (VEDVNSEVVDEVEKAEEVEEQRNDREQEEEQKEEEAPKS) form a coiled coil. Residues 12-27 (VNSEVVDEVEKAEEVE) show a composition bias toward acidic residues. A Q motif motif is present at residues 46-74 (KSFEELGLDSRLIRALTKKGIEKPTLIQQ). One can recognise a Helicase ATP-binding domain in the interval 77-259 (IPYILEGKDV…KLILHNPIVL (183 aa)). 90–97 (AKTGSGKT) serves as a coordination point for ATP. The DEAD box motif lies at 207 to 210 (DEAD). The Helicase C-terminal domain occupies 293–477 (ALLKLEVVQK…PFPLLTENAV (185 aa)). Residues 356 to 385 (IATDDNSQTKKQKEEAKGEANKENKKNNKR) are a coiled coil. Over residues 363-381 (QTKKQKEEAKGEANKENKK) the composition is skewed to basic and acidic residues. 2 disordered regions span residues 363–388 (QTKKQKEEAKGEANKENKKNNKRSKP) and 568–626 (AMGN…QKTV).

The protein belongs to the DEAD box helicase family. DDX56/DBP9 subfamily.

It carries out the reaction ATP + H2O = ADP + phosphate + H(+). In Arabidopsis thaliana (Mouse-ear cress), this protein is DEAD-box ATP-dependent RNA helicase 16 (RH16).